The following is a 367-amino-acid chain: PR domain zinc finger protein 12 (367 aa).

Positions 86–203 constitute an SET domain; the sequence is AEVIIAQSSI…PDQELLVWYG (118 aa). 3 C2H2-type zinc fingers span residues 243–265, 271–293, and 299–323; these read MRCV…MRIH, FVCR…VRLH, and YKCQ…SARH. The disordered stretch occupies residues 318–337; sequence QKSARHRPPSTALQAHSPAL.

This sequence belongs to the class V-like SAM-binding methyltransferase superfamily. Interacts with EHMT2. In terms of tissue distribution, not found in adult tissues except in dorsal root ganglia.

The protein localises to the nucleus. Transcriptional regulator necessary for the development of nociceptive neurons, playing a key role in determining the nociceptive lineage from neural crest cell progenitors. Initiates neurogenesis and activates downstream pro-neuronal transcription factors, such as NEUROD1, BRN3A, and ISL1, specifically within nociceptive neurons, while repressing non-nociceptor cell fates. Essential for the proper function of nociceptors in adults, influencing both their excitability and their gene expression, thereby impacting how these neurons respond to various pain stimuli. The polypeptide is PR domain zinc finger protein 12 (PRDM12) (Homo sapiens (Human)).